Here is a 321-residue protein sequence, read N- to C-terminus: Acetyl-coenzyme A carboxylase carboxyl transferase subunit alpha (321 aa).

The 255-residue stretch at 39 to 293 folds into the CoA carboxyltransferase C-terminal domain; the sequence is RLQQKSQTLA…RRALGDSLRQ (255 aa).

Belongs to the AccA family. As to quaternary structure, acetyl-CoA carboxylase is a heterohexamer composed of biotin carboxyl carrier protein (AccB), biotin carboxylase (AccC) and two subunits each of ACCase subunit alpha (AccA) and ACCase subunit beta (AccD).

It localises to the cytoplasm. It carries out the reaction N(6)-carboxybiotinyl-L-lysyl-[protein] + acetyl-CoA = N(6)-biotinyl-L-lysyl-[protein] + malonyl-CoA. The protein operates within lipid metabolism; malonyl-CoA biosynthesis; malonyl-CoA from acetyl-CoA: step 1/1. In terms of biological role, component of the acetyl coenzyme A carboxylase (ACC) complex. First, biotin carboxylase catalyzes the carboxylation of biotin on its carrier protein (BCCP) and then the CO(2) group is transferred by the carboxyltransferase to acetyl-CoA to form malonyl-CoA. The protein is Acetyl-coenzyme A carboxylase carboxyl transferase subunit alpha of Bordetella avium (strain 197N).